A 98-amino-acid polypeptide reads, in one-letter code: Integration host factor subunit alpha (98 aa).

The interval 54–74 (LRDKSSRPGRNPKTGESVPVS) is disordered.

It belongs to the bacterial histone-like protein family. Heterodimer of an alpha and a beta chain.

Functionally, this protein is one of the two subunits of integration host factor, a specific DNA-binding protein that functions in genetic recombination as well as in transcriptional and translational control. This is Integration host factor subunit alpha (ihfA) from Pasteurella multocida (strain Pm70).